A 168-amino-acid chain; its full sequence is Probable chemoreceptor glutamine deamidase CheD 2 (168 aa).

This sequence belongs to the CheD family.

The enzyme catalyses L-glutaminyl-[protein] + H2O = L-glutamyl-[protein] + NH4(+). Its function is as follows. Probably deamidates glutamine residues to glutamate on methyl-accepting chemotaxis receptors (MCPs), playing an important role in chemotaxis. The polypeptide is Probable chemoreceptor glutamine deamidase CheD 2 (Leptospira interrogans serogroup Icterohaemorrhagiae serovar copenhageni (strain Fiocruz L1-130)).